Reading from the N-terminus, the 1685-residue chain is Myomesin-1 (1685 aa).

A disordered region spans residues 33-80; the sequence is KKRSAVYTQGSTAYSSRSSAAHRRESEAFRRASASSSQQQASQHALSS. Low complexity-rich tracts occupy residues 41–51 and 63–80; these read QGSTAYSSRSS and RASASSSQQQASQHALSS. Position 113 is a phosphoserine (serine 113). The interval 177-244 is disordered; it reads GITTSKQSTA…TSEKKSRKVV (68 aa). Positions 179–220 are enriched in low complexity; that stretch reads TTSKQSTASKQTTASKQSTASKQSTASKQSTASRQSTASRQS. 6 tandem repeats follow at residues 182-187, 188-193, 194-199, 200-205, 206-211, and 212-217. The segment at 182-217 is 6 X 6 AA tandem repeats; it reads KQSTASKQTTASKQSTASKQSTASKQSTASRQSTAS. Residues 221–233 are compositionally biased toward polar residues; that stretch reads VVSKQATSALQQE. Ig-like C2-type domains are found at residues 277–368 and 396–498; these read PEFI…ASVV and PYGY…AYVF. 3 Fibronectin type-III domains span residues 512–607, 640–734, and 741–834; these read APLD…ALDP, PPTD…VVGD, and APGK…VKAA. The tract at residues 840-938 is disordered; sequence SPDVCPALSD…TDRAPPSPPC (99 aa). Residues 874 to 888 show a composition bias toward low complexity; sequence LLGSKPNKPSLPSSS. A phosphoserine mark is found at serine 883 and serine 887. The span at 889–902 shows a compositional bias: polar residues; that stretch reads QNLGQTEVSKVSET. Residues 920 to 931 show a composition bias toward basic and acidic residues; the sequence is SKSDPLKKKTDR. 2 Fibronectin type-III domains span residues 933 to 1034 and 1041 to 1140; these read PPSP…CEEW and PPHS…TRPG. At serine 1054 the chain carries Phosphoserine. Ig-like C2-type domains are found at residues 1132-1230, 1358-1444, and 1573-1662; these read PVVA…EELK, PHFV…LKLV, and RVLG…FTVS. A disulfide bridge links cysteine 1160 with cysteine 1210.

Homodimer. Interacts with TTN/titin. Interacts with PNKD.

It localises to the cytoplasm. The protein localises to the myofibril. Its subcellular location is the sarcomere. It is found in the m line. In terms of biological role, major component of the vertebrate myofibrillar M band. Binds myosin, titin, and light meromyosin. This binding is dose dependent. This Homo sapiens (Human) protein is Myomesin-1 (MYOM1).